Reading from the N-terminus, the 183-residue chain is Large ribosomal subunit protein bL27m (183 aa).

The transit peptide at 1-34 directs the protein to the mitochondrion; it reads MFLRPTSIPSAVSQIRAQLFAGPSSLASQIQVRW.

Belongs to the bacterial ribosomal protein bL27 family.

The protein localises to the mitochondrion. This chain is Large ribosomal subunit protein bL27m (RPL27), found in Cryptococcus neoformans var. neoformans serotype D (strain B-3501A) (Filobasidiella neoformans).